Consider the following 73-residue polypeptide: Ocellatin-PT8 (73 aa).

The signal sequence occupies residues 1 to 22; sequence MAFLKKSLFLVLFLGLVSLSIC. Positions 23-39 are excised as a propeptide; it reads DEEKRQDEDDDDDDDEE.

In terms of tissue distribution, expressed by the skin glands.

It is found in the secreted. In terms of biological role, has antibacterial activity against Gram-negative bacteria E.coli ATCC 25922 (MIC=60 uM), K.pneumoniae ATCC 700603 (MIC=240 uM) and S.choleraesuis ATCC 14028 (MIC=240 uM) and against Gram-positive bacterium S.aureus ATCC 29313 (MIC=240 uM). Shows no hemolytic activity and no cytotoxicity. This chain is Ocellatin-PT8, found in Leptodactylus pustulatus (Ceara white-lipped frog).